The following is a 284-amino-acid chain: Protein phosphatase 1 regulatory subunit 3B (284 aa).

The PP1-binding motif motif lies at Arg61–Phe64. The CBM21 domain occupies Arg124–Thr232. At Ser260 the chain carries Phosphoserine.

As to quaternary structure, interacts with glycogen, PPP1CC catalytic subunit of PP1 and PYGL. Associates with glycogen particles. Forms complexes with debranching enzyme, glycogen phosphorylase, glycogen synthase and phosphorylase kinase which is necessary for its regulation of PP1 activity. In terms of tissue distribution, highly expressed in liver (at protein level). Expressed predominantly in liver. Expressed moderately in heart. Expressed weakly in prostate, stomach, thyroid, lung, kidney, spleen and skeletal muscle.

In terms of biological role, acts as a glycogen-targeting subunit for phosphatase PP1. Facilitates interaction of the PP1 with enzymes of the glycogen metabolism and regulates its activity. Suppresses the rate at which PP1 dephosphorylates (inactivates) glycogen phosphorylase and enhances the rate at which it activates glycogen synthase and therefore limits glycogen breakdown. Its activity is inhibited by PYGL, resulting in inhibition of the glycogen synthase and glycogen phosphorylase phosphatase activities of PP1. Dramatically increases basal and insulin-stimulated glycogen synthesis upon overexpression in hepatocytes. This is Protein phosphatase 1 regulatory subunit 3B (Ppp1r3b) from Mus musculus (Mouse).